Consider the following 93-residue polypeptide: Large ribosomal subunit protein bL27 (93 aa).

The segment at 1 to 22 (MAHKKAGGSSRNGRDSEGRRLG) is disordered.

This sequence belongs to the bacterial ribosomal protein bL27 family.

The polypeptide is Large ribosomal subunit protein bL27 (Methylobacterium sp. (strain 4-46)).